A 364-amino-acid polypeptide reads, in one-letter code: Chorismate synthase (364 aa).

R48 and R54 together coordinate NADP(+). FMN-binding positions include 125–127 (RSS), G282, 297–301 (KPPAS), and R323.

It belongs to the chorismate synthase family. As to quaternary structure, homotetramer. FMNH2 is required as a cofactor.

It carries out the reaction 5-O-(1-carboxyvinyl)-3-phosphoshikimate = chorismate + phosphate. It participates in metabolic intermediate biosynthesis; chorismate biosynthesis; chorismate from D-erythrose 4-phosphate and phosphoenolpyruvate: step 7/7. Its function is as follows. Catalyzes the anti-1,4-elimination of the C-3 phosphate and the C-6 proR hydrogen from 5-enolpyruvylshikimate-3-phosphate (EPSP) to yield chorismate, which is the branch point compound that serves as the starting substrate for the three terminal pathways of aromatic amino acid biosynthesis. This reaction introduces a second double bond into the aromatic ring system. The chain is Chorismate synthase from Chloroflexus aggregans (strain MD-66 / DSM 9485).